The following is a 179-amino-acid chain: Transthyretin-like protein 46 (179 aa).

Residues 1 to 17 (MNKLFVLLIALLGLTAA) form the signal peptide. Residues 144 to 179 (RRGGFNADYMDPDNSEKDQSKSSEESEDKEKTVETF) form a disordered region. Over residues 157–179 (NSEKDQSKSSEESEDKEKTVETF) the composition is skewed to basic and acidic residues.

The protein belongs to the nematode transthyretin-like family.

The protein resides in the secreted. The protein is Transthyretin-like protein 46 (ttr-46) of Caenorhabditis elegans.